Consider the following 141-residue polypeptide: VLSANDKTNVKNVFTKITGHAEDYGAETLERMFTTYPPTKTYFPHFDLHHGSAQIKAHGKKVVGALIEAVNHIDDIAGALSKLSDLHAQKLRVDPVNFKLLGQCFLVVVAIHHPSVLTPEVHASLDKFLCAVGNVLTAKYR.

In terms of domain architecture, Globin spans 1-141; the sequence is VLSANDKTNV…VGNVLTAKYR (141 aa). His-58 is an O2 binding site. His-87 serves as a coordination point for heme b.

It belongs to the globin family. Heterotetramer of two alpha chains and two beta chains. In terms of tissue distribution, red blood cells.

Involved in oxygen transport from the lung to the various peripheral tissues. This Gyps rueppelli (Rueppell's griffon) protein is Hemoglobin subunit alpha-A/A' (HBAA).